The primary structure comprises 561 residues: Malto-oligosyltrehalose trehalohydrolase (561 aa).

253–258 (RLDAVH) is a binding site for substrate. D255 functions as the Nucleophile in the catalytic mechanism. E286 (proton donor) is an active-site residue. Substrate is bound by residues 311-315 (DDFHH) and 379-384 (HDQVGN).

The protein belongs to the glycosyl hydrolase 13 family. In terms of assembly, homodimer.

The protein localises to the cytoplasm. The enzyme catalyses hydrolysis of (1-&gt;4)-alpha-D-glucosidic linkage in 4-alpha-D-[(1-&gt;4)-alpha-D-glucanosyl]n trehalose to yield trehalose and (1-&gt;4)-alpha-D-glucan.. It functions in the pathway glycan biosynthesis; trehalose biosynthesis. The polypeptide is Malto-oligosyltrehalose trehalohydrolase (treZ) (Saccharolobus solfataricus (strain ATCC 35092 / DSM 1617 / JCM 11322 / P2) (Sulfolobus solfataricus)).